Reading from the N-terminus, the 240-residue chain is ATP-dependent dethiobiotin synthetase BioD (240 aa).

ATP is bound at residue 15 to 20 (EIGKTF). Threonine 19 is a Mg(2+) binding site. Residue lysine 40 is part of the active site. ATP-binding positions include aspartate 57, 118 to 121 (EGVG), and 178 to 179 (NR). Aspartate 57 and glutamate 118 together coordinate Mg(2+).

Belongs to the dethiobiotin synthetase family. As to quaternary structure, homodimer. Mg(2+) is required as a cofactor.

It is found in the cytoplasm. The enzyme catalyses (7R,8S)-7,8-diammoniononanoate + CO2 + ATP = (4R,5S)-dethiobiotin + ADP + phosphate + 3 H(+). Its pathway is cofactor biosynthesis; biotin biosynthesis; biotin from 7,8-diaminononanoate: step 1/2. In terms of biological role, catalyzes a mechanistically unusual reaction, the ATP-dependent insertion of CO2 between the N7 and N8 nitrogen atoms of 7,8-diaminopelargonic acid (DAPA, also called 7,8-diammoniononanoate) to form a ureido ring. In Burkholderia mallei (strain NCTC 10247), this protein is ATP-dependent dethiobiotin synthetase BioD.